Consider the following 309-residue polypeptide: Ribosomal RNA small subunit methyltransferase H (309 aa).

S-adenosyl-L-methionine-binding positions include 33-35, aspartate 53, phenylalanine 79, aspartate 100, and glutamine 107; that span reads GGH.

Belongs to the methyltransferase superfamily. RsmH family.

The protein localises to the cytoplasm. It carries out the reaction cytidine(1402) in 16S rRNA + S-adenosyl-L-methionine = N(4)-methylcytidine(1402) in 16S rRNA + S-adenosyl-L-homocysteine + H(+). In terms of biological role, specifically methylates the N4 position of cytidine in position 1402 (C1402) of 16S rRNA. The chain is Ribosomal RNA small subunit methyltransferase H from Clostridium botulinum (strain Langeland / NCTC 10281 / Type F).